The primary structure comprises 427 residues: Glutamate-1-semialdehyde 2,1-aminomutase (427 aa).

At Lys265 the chain carries N6-(pyridoxal phosphate)lysine.

Belongs to the class-III pyridoxal-phosphate-dependent aminotransferase family. HemL subfamily. In terms of assembly, homodimer. The cofactor is pyridoxal 5'-phosphate.

It localises to the cytoplasm. The enzyme catalyses (S)-4-amino-5-oxopentanoate = 5-aminolevulinate. The protein operates within porphyrin-containing compound metabolism; protoporphyrin-IX biosynthesis; 5-aminolevulinate from L-glutamyl-tRNA(Glu): step 2/2. The chain is Glutamate-1-semialdehyde 2,1-aminomutase from Burkholderia multivorans (strain ATCC 17616 / 249).